Consider the following 528-residue polypeptide: MGSIGSQRLKEPCVAATSDQSVVTSFSFDNFQLETTAEGAQDPGIRVRGVPTFTDSAVEEPVPDDRYHAIYFAMLLAGVGFLLPYNSFITDVDYLHHKYPGTSIVFDMSLTYILVALAAVLLNNVVVERLNLHTRITTGYLLALGPLLFISICDVWLQLFSHDQAYAINLAAVGTVAFGCTVQQSSFYGYTGLLPKRYTQGVMTGESTAGVMISLSRILTKLLLPDERASTIIFFLVSAGLELLCFLLHLLVRRSRFVLYYTTRPRDSRPVQAGYRVHHDVASGDIHFEHQTPALSSSRSPKESPAHEVTHSNSGVYMRFDVPRPRVKRSWPTFRALLLHRYVVARVIWADMLSIAVTYFITLCLFPGLESEIRHCVLGEWLPILVMAVFNLSDFVGKILAALPVEWRGTHLLACSCLRVVFIPLFILCVYPSGMPALRHPAWPCVFSLLMGISNGYFGSVPMILAAGKVSPKQRELAGNTMTVSYMSGLTLGSAVAYCTYSLTRDAHGSCFQTATAAAANDSIPVGP.

The Extracellular portion of the chain corresponds to 1 to 68 (MGSIGSQRLK…EEPVPDDRYH (68 aa)). The helical transmembrane segment at 69–89 (AIYFAMLLAGVGFLLPYNSFI) threads the bilayer. Residues 90 to 101 (TDVDYLHHKYPG) are Cytoplasmic-facing. The chain crosses the membrane as a helical span at residues 102 to 122 (TSIVFDMSLTYILVALAAVLL). At 123–139 (NNVVVERLNLHTRITTG) the chain is on the extracellular side. Residues 140 to 160 (YLLALGPLLFISICDVWLQLF) traverse the membrane as a helical segment. Over 161 to 166 (SHDQAY) the chain is Cytoplasmic. The chain crosses the membrane as a helical span at residues 167-187 (AINLAAVGTVAFGCTVQQSSF). The Extracellular segment spans residues 188 to 231 (YGYTGLLPKRYTQGVMTGESTAGVMISLSRILTKLLLPDERAST). A helical transmembrane segment spans residues 232–252 (IIFFLVSAGLELLCFLLHLLV). The Cytoplasmic segment spans residues 253–346 (RRSRFVLYYT…LLLHRYVVAR (94 aa)). Residues 347 to 367 (VIWADMLSIAVTYFITLCLFP) form a helical membrane-spanning segment. Residues 368-376 (GLESEIRHC) are Extracellular-facing. Residues 377 to 397 (VLGEWLPILVMAVFNLSDFVG) form a helical membrane-spanning segment. The Cytoplasmic segment spans residues 398 to 411 (KILAALPVEWRGTH). The helical transmembrane segment at 412-432 (LLACSCLRVVFIPLFILCVYP) threads the bilayer. Residues 433 to 445 (SGMPALRHPAWPC) lie on the Extracellular side of the membrane. Residues 446–466 (VFSLLMGISNGYFGSVPMILA) form a helical membrane-spanning segment. Residues 467 to 481 (AGKVSPKQRELAGNT) are Cytoplasmic-facing. A helical transmembrane segment spans residues 482–504 (MTVSYMSGLTLGSAVAYCTYSLT). The Extracellular portion of the chain corresponds to 505 to 528 (RDAHGSCFQTATAAAANDSIPVGP). Residue asparagine 521 is glycosylated (N-linked (GlcNAc...) asparagine).

This sequence belongs to the SLC29A/ENT transporter (TC 2.A.57) family. In terms of processing, N-glycosylated. Expressed in heart. Expressed in choroid plexus.

It is found in the cell membrane. It localises to the apical cell membrane. It catalyses the reaction serotonin(out) = serotonin(in). It carries out the reaction dopamine(out) = dopamine(in). The enzyme catalyses (R)-noradrenaline(out) = (R)-noradrenaline(in). The catalysed reaction is (R)-adrenaline(out) = (R)-adrenaline(in). It catalyses the reaction histamine(out) = histamine(in). It carries out the reaction tyramine(in) = tyramine(out). The enzyme catalyses guanidine(out) = guanidine(in). The catalysed reaction is adenine(out) = adenine(in). It catalyses the reaction adenosine(in) = adenosine(out). Its activity is regulated as follows. Activated at acidic pH. Its function is as follows. Electrogenic voltage-dependent transporter that mediates the transport of a variety of endogenous bioactive amines, cationic xenobiotics and drugs. Utilizes the physiologic inside-negative membrane potential as a driving force to facilitate cellular uptake of organic cations. Functions as a Na(+)- and Cl(-)-independent bidirectional transporter. Substrate transport is pH-dependent and enhanced under acidic condition, which is most likely the result of allosteric changes in the transporter structure. Implicated in monoamine neurotransmitters uptake such as serotonin, dopamine, adrenaline/epinephrine, noradrenaline/norepinephrine, histamine and tyramine, thereby supporting a role in homeostatic regulation of aminergic neurotransmission in the central nervous system. Also responsible for the uptake of bioactive amines and drugs through the blood-cerebrospinal fluid (CSF) barrier, from the CSF into choroid plexus epithelial cells, thereby playing a significant role in the clearance of cationic neurotoxins, xenobiotics and metabolic waste in the brain. Involved in bidirectional transport of the purine nucleoside adenosine and plays a role in the regulation of extracellular adenosine concentrations in cardiac tissues, in particular during ischemia. May be involved in organic cation uptake from the tubular lumen into renal tubular cells, thereby contributing to organic cation reabsorption in the kidney. Also transports adenine and guanidine. The protein is Equilibrative nucleoside transporter 4 of Mus musculus (Mouse).